We begin with the raw amino-acid sequence, 341 residues long: Ferrochelatase (341 aa).

The Fe cation site is built by histidine 189 and glutamate 293.

The protein belongs to the ferrochelatase family.

Its subcellular location is the cytoplasm. The catalysed reaction is heme b + 2 H(+) = protoporphyrin IX + Fe(2+). It functions in the pathway porphyrin-containing compound metabolism; protoheme biosynthesis; protoheme from protoporphyrin-IX: step 1/1. In terms of biological role, catalyzes the ferrous insertion into protoporphyrin IX. The chain is Ferrochelatase from Pseudomonas fluorescens (strain SBW25).